A 292-amino-acid chain; its full sequence is 4-hydroxy-tetrahydrodipicolinate synthase (292 aa).

A pyruvate-binding site is contributed by T45. Y133 functions as the Proton donor/acceptor in the catalytic mechanism. K161 (schiff-base intermediate with substrate) is an active-site residue. I203 is a binding site for pyruvate.

The protein belongs to the DapA family. Homotetramer; dimer of dimers.

It is found in the cytoplasm. The catalysed reaction is L-aspartate 4-semialdehyde + pyruvate = (2S,4S)-4-hydroxy-2,3,4,5-tetrahydrodipicolinate + H2O + H(+). Its pathway is amino-acid biosynthesis; L-lysine biosynthesis via DAP pathway; (S)-tetrahydrodipicolinate from L-aspartate: step 3/4. In terms of biological role, catalyzes the condensation of (S)-aspartate-beta-semialdehyde [(S)-ASA] and pyruvate to 4-hydroxy-tetrahydrodipicolinate (HTPA). This chain is 4-hydroxy-tetrahydrodipicolinate synthase, found in Salmonella arizonae (strain ATCC BAA-731 / CDC346-86 / RSK2980).